A 238-amino-acid polypeptide reads, in one-letter code: MSGLPESKLGTKQYWDNVYEREVSNFTEFNDEGEVWFGEEAEERIVQWLEDHISTSFREVSEAAPFRVLDLGTGNGHLLFRLLEEEDTLLPSPCQLVGVDYSEAAIVLAKNIARHRQFSDKVKFQQLDIIKDSKFCSKDWDLILDKGTFDAISLSGELLDGRPLNSVYVDRVRGMLSPNGIFLITSCNWTIQELEERFTKNGFIVHSTVPVPVFEFQGSTGSSTSVIAFQIDPSFNRK.

Belongs to the class I-like SAM-binding methyltransferase superfamily. EFM4 family.

Its subcellular location is the cytoplasm. It is found in the nucleus. Its function is as follows. S-adenosyl-L-methionine-dependent protein-lysine N-methyltransferase that mono- and dimethylates elongation factor 1-alpha at 'Lys-316'. May play a role in intracellular transport. The protein is Protein-lysine N-methyltransferase efm4 of Schizosaccharomyces pombe (strain 972 / ATCC 24843) (Fission yeast).